We begin with the raw amino-acid sequence, 91 residues long: Large ribosomal subunit protein bL31B (91 aa).

Belongs to the bacterial ribosomal protein bL31 family. Type B subfamily. Part of the 50S ribosomal subunit.

The sequence is that of Large ribosomal subunit protein bL31B from Mycolicibacterium vanbaalenii (strain DSM 7251 / JCM 13017 / BCRC 16820 / KCTC 9966 / NRRL B-24157 / PYR-1) (Mycobacterium vanbaalenii).